We begin with the raw amino-acid sequence, 453 residues long: MSQILTSRQADELHRALIAYLTAANLPNTAAALREELNLSEEVFDPATAKKYEGLLEKKWTSVVRLQKKIMDLESRNHILQSELDNATPTSRQNKDPVAWLPRAPPRHTLQSHRDPITCVAFHPVFSSLASGSEDQTIKIWDWELGELERTIKGHTKAVLDVDYGGPRGNTLLASCSSDLTIKLWDPLDSYKNIRTLPGHDHSVSAVRFIPGSGNLLVSASRDKTLRIWDVSTGYCVKTLRGHAEWVRDVCPSLDGKYILSTSDDYTSRLWDVTITNPEPKVTLIGHEHVVLCCAIAPPAAYQNLAAMAGIKKPPATSSAEFMATGSRDKSIRLWDARGTCIKTLVGHDNWVRGLVFHPGGKYLLSVSDDKTLRCWDLTQEGKCVKTIGDAHGHFVQCIKWAPSVIKDASVNGDNGEPNGTPKKGGAAATPEAQIRCVIATGSVDLNVRIFAN.

One can recognise a LisH domain in the interval 9-41; sequence QADELHRALIAYLTAANLPNTAAALREELNLSE. Positions 62–88 form a coiled coil; it reads SVVRLQKKIMDLESRNHILQSELDNAT. The segment at 84–107 is disordered; sequence LDNATPTSRQNKDPVAWLPRAPPR. WD repeat units lie at residues 112 to 153, 155 to 195, 199 to 239, 242 to 281, 286 to 345, 347 to 386, and 391 to 449; these read SHRD…RTIK, HTKA…KNIR, GHDH…CVKT, GHAE…PEPK, GHEH…IKTL, GHDN…KCVK, and AHGH…LNVR.

Belongs to the WD repeat LIS1/nudF family. As to quaternary structure, self-associates. Interacts with ro-11/nde1 and dynein.

The protein localises to the cytoplasm. The protein resides in the cytoskeleton. Its subcellular location is the spindle pole. In terms of biological role, positively regulates the activity of the minus-end directed microtubule motor protein dynein. May enhance dynein-mediated microtubule sliding by targeting dynein to the microtubule plus end. Required for nuclear migration during vegetative growth as well as development. Required for retrograde early endosome (EE) transport from the hyphal tip. Required for localization of dynein to the mitotic spindle poles. Recruits additional proteins to the dynein complex at SPBs. The protein is Nuclear distribution protein nudF-2 (nmp-1) of Neurospora crassa (strain ATCC 24698 / 74-OR23-1A / CBS 708.71 / DSM 1257 / FGSC 987).